We begin with the raw amino-acid sequence, 121 residues long: Prismalin-14 (121 aa).

An N-terminal signal peptide occupies residues 1-16; it reads MRSLLVLLALAACASA. Gln-17 carries the post-translational modification Pyrrolidone carboxylic acid. Tandem repeats lie at residues 48–51, 52–55, 56–59, and 60–63. The interval 48–63 is 4 X 4 AA approximate tandem repeats of P-I-Y-R; that stretch reads PIYRPIYRPIYYPQII.

As to expression, expressed only at the mantle edge where it is found predominantly in the inner side of the outer mantle fold.

Functionally, displays inhibitory activity against calcium carbonate precipitation, binds calcium and affects crystallization of calcium carbonate in vitro. May be involved in calcification of the prismatic layer of the shell. The chain is Prismalin-14 from Pinctada fucata (Akoya pearl oyster).